The primary structure comprises 416 residues: Pigment epithelium-derived factor (416 aa).

The first 20 residues, 1–20 (MQALVLLLWTGALLGFGRCQ), serve as a signal peptide directing secretion. 2 positions are modified to phosphoserine: serine 112 and serine 225. N-linked (GlcNAc...) asparagine glycosylation is present at asparagine 283.

It belongs to the serpin family. Interacts with PNPLA2; this interaction stimulates the phospholipase A2 activity of PNPLA2. As to expression, retinal pigment epithelial cells. Located in the interphotoreceptor matrix (IPM) which is between the retinal pigment epithelium and the neural retina.

It is found in the secreted. It localises to the melanosome. Its function is as follows. Neurotrophic protein; induces extensive neuronal differentiation in retinoblastoma cells. Potent inhibitor of angiogenesis. As it does not undergo the S (stressed) to R (relaxed) conformational transition characteristic of active serpins, it exhibits no serine protease inhibitory activity. The chain is Pigment epithelium-derived factor (SERPINF1) from Bos taurus (Bovine).